A 112-amino-acid polypeptide reads, in one-letter code: Larval cuticle protein III/IV (112 aa).

The N-terminal stretch at 1 to 16 (MFKILLVCALAALVAA) is a signal peptide. A Chitin-binding type R&amp;R domain is found at 31 to 92 (PDGFKTVVSL…PSSDLLPVAP (62 aa)).

In terms of biological role, component of the larval cuticle. This Drosophila miranda (Fruit fly) protein is Larval cuticle protein III/IV (Lcp3).